The chain runs to 523 residues: Probable lipid II flippase MurJ (523 aa).

12 consecutive transmembrane segments (helical) span residues 98 to 118 (AFYSLLLVFLGVLTLLGIVYV), 146 to 166 (IMFGFVFFVCTYAFYMGILNA), 170 to 190 (FGLPALAPALLNVSMLVFTFM), 201 to 221 (GLAWGVLIGGLLQALLLAVAL), 246 to 266 (MLPGLIGMGLLQFSTLVNLYF), 284 to 304 (LLELPLSLISVSIGAALLPTL), 328 to 348 (LFLAWPAALGLYILAEPIIEV), 360 to 380 (VQMTAAILRIYAVSLLLVSCS), 395 to 415 (VPMVLALVSLAVHVSLAPVLM), 422 to 442 (GLMISGVVAALINAVLLMGLL), 461 to 481 (FVLAGAGMVISLQAYELLMAQ), and 489 to 509 (LALFVTILLAVVAYFGLAYVL).

The protein belongs to the MurJ/MviN family.

It localises to the cell inner membrane. It participates in cell wall biogenesis; peptidoglycan biosynthesis. Its function is as follows. Involved in peptidoglycan biosynthesis. Transports lipid-linked peptidoglycan precursors from the inner to the outer leaflet of the cytoplasmic membrane. This chain is Probable lipid II flippase MurJ, found in Bdellovibrio bacteriovorus (strain ATCC 15356 / DSM 50701 / NCIMB 9529 / HD100).